The primary structure comprises 205 residues: Arginine exporter protein ArgO (205 aa).

A run of 6 helical transmembrane segments spans residues 1–21 (MLAVFLQGFALSAAMILPLGP), 42–62 (LCALSDIILICAGIFGGSALL), 67–87 (LLLALVTWGGVAFLLWYGWGA), 111–131 (IIVTLLAVTWLNPHVYLDTFV), 147–167 (WFAFGAVSASVAWFFALALLA), and 182–202 (VINLLVGGVMWFIAFQLARQG).

Belongs to the LysE/ArgO transporter (TC 2.A.75) family.

Its subcellular location is the cell inner membrane. The catalysed reaction is L-arginine(in) = L-arginine(out). Involved in the export of arginine. Important to control the intracellular level of arginine and the correct balance between arginine and lysine. In Yersinia enterocolitica serotype O:8 / biotype 1B (strain NCTC 13174 / 8081), this protein is Arginine exporter protein ArgO.